The sequence spans 873 residues: Leucine--tRNA ligase (873 aa).

Residues 48-58 (PYPSGKLHMGH) carry the 'HIGH' region motif. The 'KMSKS' region signature appears at 636 to 640 (KMSKS). ATP is bound at residue K639.

This sequence belongs to the class-I aminoacyl-tRNA synthetase family.

The protein resides in the cytoplasm. It carries out the reaction tRNA(Leu) + L-leucine + ATP = L-leucyl-tRNA(Leu) + AMP + diphosphate. The sequence is that of Leucine--tRNA ligase from Cupriavidus metallidurans (strain ATCC 43123 / DSM 2839 / NBRC 102507 / CH34) (Ralstonia metallidurans).